We begin with the raw amino-acid sequence, 284 residues long: Elongation factor Ts (284 aa).

The tract at residues 80–83 (TDFV) is involved in Mg(2+) ion dislocation from EF-Tu.

Belongs to the EF-Ts family.

It localises to the cytoplasm. Associates with the EF-Tu.GDP complex and induces the exchange of GDP to GTP. It remains bound to the aminoacyl-tRNA.EF-Tu.GTP complex up to the GTP hydrolysis stage on the ribosome. The protein is Elongation factor Ts of Neisseria gonorrhoeae (strain ATCC 700825 / FA 1090).